Here is a 112-residue protein sequence, read N- to C-terminus: Nitrogenase-stabilizing/protective protein NifW (112 aa).

Belongs to the NifW family. In terms of assembly, homotrimer; associates with NifD.

In terms of biological role, may protect the nitrogenase Fe-Mo protein from oxidative damage. The sequence is that of Nitrogenase-stabilizing/protective protein NifW from Burkholderia vietnamiensis (strain G4 / LMG 22486) (Burkholderia cepacia (strain R1808)).